We begin with the raw amino-acid sequence, 131 residues long: Aspartate 1-decarboxylase (131 aa).

The Schiff-base intermediate with substrate; via pyruvic acid role is filled by Ser-25. Ser-25 carries the pyruvic acid (Ser) modification. Thr-57 provides a ligand contact to substrate. The active-site Proton donor is Tyr-58. Position 73–75 (73–75) interacts with substrate; it reads GAA. The interval 112-131 is disordered; it reads NVPTTQKSENPGQGSLRNAI. Residues 113 to 131 show a composition bias toward polar residues; sequence VPTTQKSENPGQGSLRNAI.

Belongs to the PanD family. In terms of assembly, heterooctamer of four alpha and four beta subunits. Requires pyruvate as cofactor. Post-translationally, is synthesized initially as an inactive proenzyme, which is activated by self-cleavage at a specific serine bond to produce a beta-subunit with a hydroxyl group at its C-terminus and an alpha-subunit with a pyruvoyl group at its N-terminus.

The protein resides in the cytoplasm. The catalysed reaction is L-aspartate + H(+) = beta-alanine + CO2. It participates in cofactor biosynthesis; (R)-pantothenate biosynthesis; beta-alanine from L-aspartate: step 1/1. Catalyzes the pyruvoyl-dependent decarboxylation of aspartate to produce beta-alanine. In Syntrophotalea carbinolica (strain DSM 2380 / NBRC 103641 / GraBd1) (Pelobacter carbinolicus), this protein is Aspartate 1-decarboxylase.